Here is a 38-residue protein sequence, read N- to C-terminus: Large ribosomal subunit protein bL36 (38 aa).

This sequence belongs to the bacterial ribosomal protein bL36 family.

The polypeptide is Large ribosomal subunit protein bL36 (Pseudomonas entomophila (strain L48)).